The primary structure comprises 26 residues: Mu-theraphotoxin-Phlo2a (26 aa).

Cystine bridges form between cysteine 2–cysteine 16, cysteine 9–cysteine 21, and cysteine 15–cysteine 25.

This sequence belongs to the neurotoxin 30 (phrixotoxin) family. As to expression, expressed by the venom gland.

It is found in the secreted. Its function is as follows. Gating-modifier toxin that non-selectively inhibits voltage-gated sodium channel Nav by shifting the threshold for channel activation to more positive potentials. This toxin moderately inhibits human Nav1.2/SCN2A (IC(50)=404 nM), Nav1.5/SCN5A (IC(50)=218 nM) and Nav1.7/SCN9A (IC(50)=333 nM). Inhibition of Nav1.7 is voltage-dependent, with lower inhibition at more positive test pulses. This is Mu-theraphotoxin-Phlo2a from Phlogius sp. (Tarantula spider).